A 314-amino-acid polypeptide reads, in one-letter code: Coiled-coil domain-containing protein 42 like-2 (314 aa).

Coiled coils occupy residues 34 to 139 (RLLE…RQEK) and 175 to 233 (NKLL…WESR).

This sequence belongs to the CFAP73 family.

This chain is Coiled-coil domain-containing protein 42 like-2, found in Xenopus laevis (African clawed frog).